We begin with the raw amino-acid sequence, 460 residues long: MKKDIPVKKNSTYNLYITGMGTKGEGIGKINNFTIFVTGAILGEEVEVNIIKVNKNYAVGKLLNIITPSANRVEPPCDIYTKCGGCQLQHMSYKEQLNFKRQKVKDALLRLGGIDVEVEEVLGMENPYRYRNKVQLPIGKEKGKVNIGFYAPRSHNIIDLKSCFIQDEKADKIIKILKEWIEKFNVSIYDEKEHKGNLRHIMVRTAFRTGQIMIVLVTKDKKLPHKEELINKLTEDLEGVVSIIQNMNSQKTNVVLGKESIVLWGKDKIIDYIGNFKFAITPLSFFQVNPIQTEVLYNKALEYADLKGDEVVFDAYCGTGTISLFLSQKAKKVYGVEIVNEAIESAKLNARENNVDNVDFIVGESEQIIPELIEKGIKADVVVVDPPRKGCEKSLLEAMAKMAPEKIVYVSCDPATLARDLGVLEELGYKTMKVQPVDMFSNTYHVETIILMTYYGDKKK.

The TRAM domain maps to 6 to 64 (PVKKNSTYNLYITGMGTKGEGIGKINNFTIFVTGAILGEEVEVNIIKVNKNYAVGKLLN). Positions 77, 83, 86, and 163 each coordinate [4Fe-4S] cluster. Residues Q287, Y316, E337, and D385 each contribute to the S-adenosyl-L-methionine site. Catalysis depends on C412, which acts as the Nucleophile.

It belongs to the class I-like SAM-binding methyltransferase superfamily. RNA M5U methyltransferase family.

This is an uncharacterized protein from Clostridium tetani (strain Massachusetts / E88).